The primary structure comprises 323 residues: o-succinylbenzoate synthase (323 aa).

Catalysis depends on K134, which acts as the Proton donor. Residues D162, E191, and D214 each contribute to the Mg(2+) site. The active-site Proton acceptor is the K236.

This sequence belongs to the mandelate racemase/muconate lactonizing enzyme family. MenC type 1 subfamily. It depends on a divalent metal cation as a cofactor.

The enzyme catalyses (1R,6R)-6-hydroxy-2-succinyl-cyclohexa-2,4-diene-1-carboxylate = 2-succinylbenzoate + H2O. It functions in the pathway quinol/quinone metabolism; 1,4-dihydroxy-2-naphthoate biosynthesis; 1,4-dihydroxy-2-naphthoate from chorismate: step 4/7. It participates in quinol/quinone metabolism; menaquinone biosynthesis. Its function is as follows. Converts 2-succinyl-6-hydroxy-2,4-cyclohexadiene-1-carboxylate (SHCHC) to 2-succinylbenzoate (OSB). This is o-succinylbenzoate synthase from Yersinia pseudotuberculosis serotype I (strain IP32953).